Consider the following 396-residue polypeptide: Phosphopentomutase (396 aa).

The Mn(2+) site is built by Asp-13, Asp-288, His-293, Asp-329, His-330, and His-341.

It belongs to the phosphopentomutase family. Requires Mn(2+) as cofactor.

Its subcellular location is the cytoplasm. The enzyme catalyses 2-deoxy-alpha-D-ribose 1-phosphate = 2-deoxy-D-ribose 5-phosphate. The catalysed reaction is alpha-D-ribose 1-phosphate = D-ribose 5-phosphate. It functions in the pathway carbohydrate degradation; 2-deoxy-D-ribose 1-phosphate degradation; D-glyceraldehyde 3-phosphate and acetaldehyde from 2-deoxy-alpha-D-ribose 1-phosphate: step 1/2. In terms of biological role, isomerase that catalyzes the conversion of deoxy-ribose 1-phosphate (dRib-1-P) and ribose 1-phosphate (Rib-1-P) to deoxy-ribose 5-phosphate (dRib-5-P) and ribose 5-phosphate (Rib-5-P), respectively. The polypeptide is Phosphopentomutase (Clostridium botulinum (strain Alaska E43 / Type E3)).